The chain runs to 231 residues: Probable transglycosylase SceD (231 aa).

The N-terminal stretch at 1-27 is a signal peptide; sequence MKKTLLASSLAVGLGIVAGNAGHEAHA. The span at 93–116 shows a compositional bias: polar residues; the sequence is SAQAPATNNVEPSAVQANQVQSQE. Residues 93 to 152 form a disordered region; that stretch reads SAQAPATNNVEPSAVQANQVQSQEVEAPQNAQTQQPQASTSNNSQVTATPTESKASEGSS. Residues 119–137 are compositionally biased toward low complexity; sequence APQNAQTQQPQASTSNNSQ. Positions 138–152 are enriched in polar residues; the sequence is VTATPTESKASEGSS.

Belongs to the transglycosylase family. SceD subfamily.

The protein localises to the secreted. In terms of biological role, is able to cleave peptidoglycan and affects clumping and separation of bacterial cells. The chain is Probable transglycosylase SceD (sceD) from Staphylococcus aureus (strain Mu3 / ATCC 700698).